Consider the following 260-residue polypeptide: Dehydrogenase/reductase SDR family member 11 (260 aa).

A signal peptide spans 1 to 30; it reads MARPGMERWRDRLALVTGASGGIGAAVARA. NADP(+) contacts are provided by residues 18–23, 43–44, Glu-49, 70–71, and Asn-97; these read GASGGI, RT, and DL. Substrate contacts are provided by Ser-151 and Tyr-166. NADP(+)-binding positions include Tyr-166, Lys-170, 201–204, and Lys-208; that span reads VETQ. The active-site Proton acceptor is Tyr-166.

This sequence belongs to the short-chain dehydrogenases/reductases (SDR) family. In terms of assembly, homotetramer. Isoform 1: Ubiquitously expressed, with highest levels in testis, small intestine, colon, kidney, brain and heart. Isoform 3: Expressed in brain, heart and skeletal muscle.

Its subcellular location is the secreted. The catalysed reaction is a 3beta-hydroxysteroid + NADP(+) = a 3-oxosteroid + NADPH + H(+). It carries out the reaction 17beta-estradiol + NAD(+) = estrone + NADH + H(+). It catalyses the reaction 17beta-estradiol + NADP(+) = estrone + NADPH + H(+). The protein operates within steroid biosynthesis; estrogen biosynthesis. Inhibited by flavonoids including apigenin, luteolin, genistein, kaempferol and quercetin and also by carbenoxolone, zearalenone, glycyrrhetinic, curcumin and flufenamic acid. Functionally, catalyzes the conversion of the 17-keto group of estrone, 4- and 5-androstenes and 5-alpha-androstanes into their 17-beta-hydroxyl metabolites and the conversion of the 3-keto group of 3-, 3,17- and 3,20- diketosteroids into their 3-hydroxyl metabolites. Exhibits reductive 3-beta-hydroxysteroid dehydrogenase activity toward 5-beta-androstanes, 5-beta-pregnanes, 4-pregnenes and bile acids. May also reduce endogenous and exogenous alpha-dicarbonyl compounds and xenobiotic alicyclic ketones. The sequence is that of Dehydrogenase/reductase SDR family member 11 (DHRS11) from Homo sapiens (Human).